The chain runs to 436 residues: 3-ketoacyl-CoA thiolase (436 aa).

The active-site Acyl-thioester intermediate is C99. Active-site proton acceptor residues include H392 and C422.

It belongs to the thiolase-like superfamily. Thiolase family. In terms of assembly, heterotetramer of two alpha chains (FadJ) and two beta chains (FadI).

The protein resides in the cytoplasm. It catalyses the reaction an acyl-CoA + acetyl-CoA = a 3-oxoacyl-CoA + CoA. Its pathway is lipid metabolism; fatty acid beta-oxidation. In terms of biological role, catalyzes the final step of fatty acid oxidation in which acetyl-CoA is released and the CoA ester of a fatty acid two carbons shorter is formed. The chain is 3-ketoacyl-CoA thiolase from Shigella boydii serotype 4 (strain Sb227).